Consider the following 317-residue polypeptide: Protoheme IX farnesyltransferase (317 aa).

A run of 6 helical transmembrane segments spans residues 25-45, 54-74, 117-137, 167-189, 244-264, and 281-301; these read FFAL…LVGM, PVIG…SGCL, LMLG…TIVF, IGQA…IIFI, LGFG…AMLV, and AAMS…SALL.

The protein belongs to the UbiA prenyltransferase family. Protoheme IX farnesyltransferase subfamily.

It is found in the cell inner membrane. It catalyses the reaction heme b + (2E,6E)-farnesyl diphosphate + H2O = Fe(II)-heme o + diphosphate. It functions in the pathway porphyrin-containing compound metabolism; heme O biosynthesis; heme O from protoheme: step 1/1. Its function is as follows. Converts heme B (protoheme IX) to heme O by substitution of the vinyl group on carbon 2 of heme B porphyrin ring with a hydroxyethyl farnesyl side group. In Methylobacterium nodulans (strain LMG 21967 / CNCM I-2342 / ORS 2060), this protein is Protoheme IX farnesyltransferase.